Consider the following 179-residue polypeptide: Orotate phosphoribosyltransferase (179 aa).

5-phospho-alpha-D-ribose 1-diphosphate-binding positions include arginine 94, lysine 95, lysine 98, histidine 100, and 120-128 (EDTSTTGAS). 2 residues coordinate orotate: threonine 124 and arginine 152.

The protein belongs to the purine/pyrimidine phosphoribosyltransferase family. PyrE subfamily. Homodimer. Mg(2+) serves as cofactor.

The catalysed reaction is orotidine 5'-phosphate + diphosphate = orotate + 5-phospho-alpha-D-ribose 1-diphosphate. It participates in pyrimidine metabolism; UMP biosynthesis via de novo pathway; UMP from orotate: step 1/2. In terms of biological role, catalyzes the transfer of a ribosyl phosphate group from 5-phosphoribose 1-diphosphate to orotate, leading to the formation of orotidine monophosphate (OMP). The polypeptide is Orotate phosphoribosyltransferase (Mycobacterium leprae (strain TN)).